Reading from the N-terminus, the 105-residue chain is uncharacterized protein (105 aa).

The protein localises to the mitochondrion. This is an uncharacterized protein from Paramecium tetraurelia.